The chain runs to 168 residues: uncharacterized protein (168 aa).

A helical transmembrane segment spans residues 5–24 (IAWASACLLLVMLTGFFTIG).

Its subcellular location is the membrane. This is an uncharacterized protein from Bacillus subtilis (strain 168).